We begin with the raw amino-acid sequence, 77 residues long: Conotoxin CaHr91 (77 aa).

Positions 1 to 19 (MKLTCALIITVLFLSITAD) are cleaved as a signal peptide. A propeptide spanning residues 20-43 (DSRGKQGYRALKSIAGMLNSKTVR) is cleaved from the precursor. Cystine bridges form between Cys-45-Cys-60, Cys-52-Cys-65, and Cys-59-Cys-74.

This sequence belongs to the conotoxin O1 superfamily. Expressed by the venom duct.

It localises to the secreted. The polypeptide is Conotoxin CaHr91 (Conus capitaneus (Captain cone)).